A 323-amino-acid chain; its full sequence is Acetyl-coenzyme A carboxylase carboxyl transferase subunit alpha (323 aa).

The CoA carboxyltransferase C-terminal domain occupies 39-293 (RLSKKSQQLT…RRALADSLRQ (255 aa)).

This sequence belongs to the AccA family. Acetyl-CoA carboxylase is a heterohexamer composed of biotin carboxyl carrier protein (AccB), biotin carboxylase (AccC) and two subunits each of ACCase subunit alpha (AccA) and ACCase subunit beta (AccD).

It localises to the cytoplasm. It carries out the reaction N(6)-carboxybiotinyl-L-lysyl-[protein] + acetyl-CoA = N(6)-biotinyl-L-lysyl-[protein] + malonyl-CoA. Its pathway is lipid metabolism; malonyl-CoA biosynthesis; malonyl-CoA from acetyl-CoA: step 1/1. In terms of biological role, component of the acetyl coenzyme A carboxylase (ACC) complex. First, biotin carboxylase catalyzes the carboxylation of biotin on its carrier protein (BCCP) and then the CO(2) group is transferred by the carboxyltransferase to acetyl-CoA to form malonyl-CoA. This Paraburkholderia phymatum (strain DSM 17167 / CIP 108236 / LMG 21445 / STM815) (Burkholderia phymatum) protein is Acetyl-coenzyme A carboxylase carboxyl transferase subunit alpha.